Here is a 406-residue protein sequence, read N- to C-terminus: Putative sodium-coupled neutral amino acid transporter 11 (406 aa).

Residues 1-7 (MKQAGFP) lie on the Cytoplasmic side of the membrane. A helical transmembrane segment spans residues 8-28 (LGILLLFWVSYVTDFSLVLLI). N-linked (GlcNAc...) asparagine glycosylation is present at N44. 6 helical membrane-spanning segments follow: residues 48–68 (GFPG…IAMI), 93–113 (VFIG…LPLS), 121–141 (LGKV…IVMA), 156–176 (AWVF…FAFI), 202–222 (MSIV…YLTF), and 241–263 (VTFG…CFVT). A glycan (N-linked (GlcNAc...) asparagine) is linked at N275. 3 consecutive transmembrane segments (helical) span residues 279–299 (VFHI…SLLI), 301–321 (CLGI…IFII), and 340–360 (IMSC…FVMA).

This sequence belongs to the amino acid/polyamine transporter 2 family.

The protein resides in the membrane. Putative sodium-dependent amino acid/proton antiporter. The protein is Putative sodium-coupled neutral amino acid transporter 11 (SLC38A11) of Homo sapiens (Human).